Consider the following 2570-residue polypeptide: Highly reducing polyketide synthase tstA (2570 aa).

In terms of domain architecture, Ketosynthase family 3 (KS3) spans alanine 16 to asparagine 443. Catalysis depends on for beta-ketoacyl synthase activity residues cysteine 191, histidine 326, and histidine 366. Positions histidine 458–histidine 478 are disordered. Positions threonine 464 to histidine 478 are enriched in low complexity. In terms of domain architecture, Malonyl-CoA:ACP transacylase (MAT) spans phenylalanine 567 to alanine 898. The tract at residues threonine 965–lysine 1103 is N-terminal hotdog fold. The PKS/mFAS DH domain maps to threonine 965 to aspartate 1293. The active-site Proton acceptor; for dehydratase activity is histidine 997. The interval arginine 1133 to aspartate 1293 is C-terminal hotdog fold. Catalysis depends on aspartate 1198, which acts as the Proton donor; for dehydratase activity. A methyltransferase (CMeT) domain region spans residues leucine 1343–tyrosine 1645. Residues glycine 1866–glycine 2178 enclose the Enoyl reductase (ER) domain. One can recognise a Ketoreductase (KR) domain in the interval alanine 2202 to serine 2379. A Carrier domain is found at aspartate 2482 to serine 2559. Serine 2519 carries the O-(pantetheine 4'-phosphoryl)serine modification.

Pantetheine 4'-phosphate is required as a cofactor.

The protein operates within secondary metabolite biosynthesis. Functionally, highly reducing polyketide synthase; part of the gene cluster that mediates the biosynthesis of the antihypercholesterolemic agents phomoidrides which are dimeric anhydrides. The pathway begins with the highly reducing polyketide synthase tstA that catalyzes the formation of a C12-fatty acyl-ACP, starting from one acetate and 5 malonate units. The hydrolase tstM is involved in the release of the C12-fatty acyl chain from tstA. The alkylcitrate synthase (ACS) tstJ and the alkylcitrate dehydratase (ACDH) tstI then give rise to decarboxylated monomeric anhydrides by coupling the C12-fatty acyl chain with oxalacetic acid. The cyclase tstC is responsible for the dimerization of the monomeric anhydrides which leads to the production of prephomoidride that contains the characteristic bicyclo[4.3.1]deca-1,6-diene system of phomoidrides. Iterative oxidation catalyzed by the alpha-ketoglutarate-dependent dioxygenase tstK produced then phomoidride A. Finally, the methyltransferase tstE converts phomoidride A to phomoidride B via an acetalization reaction. The phosphatidylethanolamine-binding protein tstB and tstN are not essential for dimerization and their functions have still to be determined. In Talaromyces stipitatus (strain ATCC 10500 / CBS 375.48 / QM 6759 / NRRL 1006) (Penicillium stipitatum), this protein is Highly reducing polyketide synthase tstA.